We begin with the raw amino-acid sequence, 275 residues long: Acetyl-coenzyme A carboxylase carboxyl transferase subunit beta (275 aa).

The CoA carboxyltransferase N-terminal domain occupies 21–275 (GLWIKCQCGA…IKIIGMHQAG (255 aa)). Positions 26, 28, 44, and 47 each coordinate Zn(2+). Residues 26 to 47 (CQCGAILFAKDLERNLKVCQKC) form a C4-type zinc finger.

It belongs to the AccD/PCCB family. As to quaternary structure, acetyl-CoA carboxylase is a heterohexamer composed of biotin carboxyl carrier protein (AccB), biotin carboxylase (AccC) and two subunits each of ACCase subunit alpha (AccA) and ACCase subunit beta (AccD). The cofactor is Zn(2+).

It is found in the cytoplasm. The catalysed reaction is N(6)-carboxybiotinyl-L-lysyl-[protein] + acetyl-CoA = N(6)-biotinyl-L-lysyl-[protein] + malonyl-CoA. It functions in the pathway lipid metabolism; malonyl-CoA biosynthesis; malonyl-CoA from acetyl-CoA: step 1/1. In terms of biological role, component of the acetyl coenzyme A carboxylase (ACC) complex. Biotin carboxylase (BC) catalyzes the carboxylation of biotin on its carrier protein (BCCP) and then the CO(2) group is transferred by the transcarboxylase to acetyl-CoA to form malonyl-CoA. In Desulforudis audaxviator (strain MP104C), this protein is Acetyl-coenzyme A carboxylase carboxyl transferase subunit beta.